Reading from the N-terminus, the 209-residue chain is FK506-binding protein 2B (209 aa).

The signal sequence occupies residues 1 to 19 (MRFSLLALLGTIVATSVSA). Residues 47–136 (GDELSMHYTG…VFEVELLEIK (90 aa)) form the PPIase FKBP-type domain. Residues 157 to 177 (FTSPSFLVSTGIIVALFLIVF) traverse the membrane as a helical segment. The stretch at 178–207 (KMAKKQDIAEANEKAAAATAEASTEKKEEK) forms a coiled coil. The interval 190–209 (EKAAAATAEASTEKKEEKKE) is disordered. Basic and acidic residues predominate over residues 200 to 209 (STEKKEEKKE).

The protein belongs to the FKBP-type PPIase family. FKBP2 subfamily.

The protein localises to the membrane. The enzyme catalyses [protein]-peptidylproline (omega=180) = [protein]-peptidylproline (omega=0). With respect to regulation, inhibited by both FK506 and rapamycin. Its function is as follows. PPIases accelerate the folding of proteins. It catalyzes the cis-trans isomerization of proline imidic peptide bonds in oligopeptides. The chain is FK506-binding protein 2B (FKBP3) from Rhizopus delemar (strain RA 99-880 / ATCC MYA-4621 / FGSC 9543 / NRRL 43880) (Mucormycosis agent).